Here is a 521-residue protein sequence, read N- to C-terminus: GMP synthase [glutamine-hydrolyzing] (521 aa).

The 193-residue stretch at 5–197 folds into the Glutamine amidotransferase type-1 domain; the sequence is KILILDFGSQ…VLDICGAQPG (193 aa). The active-site Nucleophile is Cys81. Residues His171 and Glu173 contribute to the active site. Residues 198–390 form the GMPS ATP-PPase domain; that stretch reads WTMPNYIEEA…LGLPREMVYR (193 aa). 225 to 231 is a binding site for ATP; sequence SGGVDSS.

Homodimer.

The catalysed reaction is XMP + L-glutamine + ATP + H2O = GMP + L-glutamate + AMP + diphosphate + 2 H(+). It functions in the pathway purine metabolism; GMP biosynthesis; GMP from XMP (L-Gln route): step 1/1. In terms of biological role, catalyzes the synthesis of GMP from XMP. The polypeptide is GMP synthase [glutamine-hydrolyzing] (Neisseria meningitidis serogroup C (strain 053442)).